The primary structure comprises 506 residues: Secreted RxLR effector protein 134 (506 aa).

A signal peptide spans 1–19; the sequence is MQGAYCVAVALLIAASGQA. Positions 50 to 71 match the RxLR-dEER motif; sequence RVLQVSHYPKDDLMLLAGNEER.

It belongs to the RxLR effector family.

Its subcellular location is the secreted. The protein resides in the host nucleus. Functionally, secreted effector that completely suppresses the host cell death induced by cell death-inducing proteins. The polypeptide is Secreted RxLR effector protein 134 (Plasmopara viticola (Downy mildew of grapevine)).